The sequence spans 730 residues: DNA ligase (730 aa).

Positions methionine 1–leucine 23 are disordered. Residues aspartate 44 to aspartate 48, serine 93 to leucine 94, and glutamate 124 contribute to the NAD(+) site. Lysine 126 functions as the N6-AMP-lysine intermediate in the catalytic mechanism. Residues arginine 147, glutamate 184, lysine 300, and lysine 324 each contribute to the NAD(+) site. Residues cysteine 418, cysteine 421, cysteine 437, and cysteine 443 each coordinate Zn(2+). The 90-residue stretch at glutamate 638 to proline 727 folds into the BRCT domain.

The protein belongs to the NAD-dependent DNA ligase family. LigA subfamily. The cofactor is Mg(2+). Requires Mn(2+) as cofactor.

It catalyses the reaction NAD(+) + (deoxyribonucleotide)n-3'-hydroxyl + 5'-phospho-(deoxyribonucleotide)m = (deoxyribonucleotide)n+m + AMP + beta-nicotinamide D-nucleotide.. DNA ligase that catalyzes the formation of phosphodiester linkages between 5'-phosphoryl and 3'-hydroxyl groups in double-stranded DNA using NAD as a coenzyme and as the energy source for the reaction. It is essential for DNA replication and repair of damaged DNA. The sequence is that of DNA ligase from Streptomyces avermitilis (strain ATCC 31267 / DSM 46492 / JCM 5070 / NBRC 14893 / NCIMB 12804 / NRRL 8165 / MA-4680).